The primary structure comprises 360 residues: UDP-N-acetylglucosamine--N-acetylmuramyl-(pentapeptide) pyrophosphoryl-undecaprenol N-acetylglucosamine transferase (360 aa).

2 residues coordinate UDP-N-acetyl-alpha-D-glucosamine: Ser-198 and Gln-289.

This sequence belongs to the glycosyltransferase 28 family. MurG subfamily.

The protein localises to the cell membrane. It carries out the reaction Mur2Ac(oyl-L-Ala-gamma-D-Glu-L-Lys-D-Ala-D-Ala)-di-trans,octa-cis-undecaprenyl diphosphate + UDP-N-acetyl-alpha-D-glucosamine = beta-D-GlcNAc-(1-&gt;4)-Mur2Ac(oyl-L-Ala-gamma-D-Glu-L-Lys-D-Ala-D-Ala)-di-trans,octa-cis-undecaprenyl diphosphate + UDP + H(+). It participates in cell wall biogenesis; peptidoglycan biosynthesis. Functionally, cell wall formation. Catalyzes the transfer of a GlcNAc subunit on undecaprenyl-pyrophosphoryl-MurNAc-pentapeptide (lipid intermediate I) to form undecaprenyl-pyrophosphoryl-MurNAc-(pentapeptide)GlcNAc (lipid intermediate II). The sequence is that of UDP-N-acetylglucosamine--N-acetylmuramyl-(pentapeptide) pyrophosphoryl-undecaprenol N-acetylglucosamine transferase from Streptococcus pyogenes serotype M18 (strain MGAS8232).